The primary structure comprises 84 residues: Cell division topological specificity factor (84 aa).

Belongs to the MinE family.

In terms of biological role, prevents the cell division inhibition by proteins MinC and MinD at internal division sites while permitting inhibition at polar sites. This ensures cell division at the proper site by restricting the formation of a division septum at the midpoint of the long axis of the cell. The chain is Cell division topological specificity factor from Cupriavidus pinatubonensis (strain JMP 134 / LMG 1197) (Cupriavidus necator (strain JMP 134)).